The primary structure comprises 164 residues: ATP synthase subunit b (164 aa).

The chain crosses the membrane as a helical span at residues 6–26 (GELIGNFILITGSFILLLVLI).

It belongs to the ATPase B chain family. As to quaternary structure, F-type ATPases have 2 components, F(1) - the catalytic core - and F(0) - the membrane proton channel. F(1) has five subunits: alpha(3), beta(3), gamma(1), delta(1), epsilon(1). F(0) has three main subunits: a(1), b(2) and c(10-14). The alpha and beta chains form an alternating ring which encloses part of the gamma chain. F(1) is attached to F(0) by a central stalk formed by the gamma and epsilon chains, while a peripheral stalk is formed by the delta and b chains.

The protein localises to the cell membrane. F(1)F(0) ATP synthase produces ATP from ADP in the presence of a proton or sodium gradient. F-type ATPases consist of two structural domains, F(1) containing the extramembraneous catalytic core and F(0) containing the membrane proton channel, linked together by a central stalk and a peripheral stalk. During catalysis, ATP synthesis in the catalytic domain of F(1) is coupled via a rotary mechanism of the central stalk subunits to proton translocation. Its function is as follows. Component of the F(0) channel, it forms part of the peripheral stalk, linking F(1) to F(0). The sequence is that of ATP synthase subunit b from Streptococcus pneumoniae serotype 2 (strain D39 / NCTC 7466).